The sequence spans 119 residues: Protein FATTY ACID EXPORT 5 (119 aa).

Transmembrane regions (helical) follow at residues 27 to 47, 57 to 77, and 85 to 105; these read SIASLAGGAGTGLLVVLAGFI, TSLLATLLETVIAAALTFVMG, and KIMPAALVAGISALMTCFYVY.

This sequence belongs to the TMEM14 family.

The protein localises to the membrane. In terms of biological role, may be involved in free fatty acids export. This Arabidopsis thaliana (Mouse-ear cress) protein is Protein FATTY ACID EXPORT 5.